Here is a 538-residue protein sequence, read N- to C-terminus: Sterol esterase 2 (538 aa).

Residues 1–11 are Cytoplasmic-facing; that stretch reads MVNKVVDEVQR. The chain crosses the membrane as a helical; Signal-anchor for type II membrane protein span at residues 12-32; the sequence is LVSAIILTSFMTGLFILSLWK. Over 33 to 538 the chain is Lumenal; that stretch reads NYVTVHFQHK…IENLRFPNAR (506 aa). A disordered region spans residues 42–87; that stretch reads KNDPRDTRSSRTKIQPNDKKKKRPARHSRPLSISSTTPLDLQRDQE. The span at 60-70 shows a compositional bias: basic residues; sequence KKKKRPARHSR. 2 positions are modified to phosphoserine: Ser73 and Ser107. The active-site Nucleophile is Ser287. Residues Asp480 and His511 each act as charge relay system in the active site.

It belongs to the AB hydrolase superfamily. Not glycosylated.

It localises to the cell membrane. It carries out the reaction a sterol ester + H2O = a sterol + a fatty acid + H(+). Functionally, mediates the hydrolysis of steryl esters. Required for mobilization of steryl ester, thereby playing a central role in lipid metabolism. This Saccharomyces cerevisiae (strain ATCC 204508 / S288c) (Baker's yeast) protein is Sterol esterase 2 (YEH2).